The sequence spans 136 residues: Small ribosomal subunit protein uS9 (136 aa).

Belongs to the universal ribosomal protein uS9 family.

This is Small ribosomal subunit protein uS9 from Borrelia garinii subsp. bavariensis (strain ATCC BAA-2496 / DSM 23469 / PBi) (Borreliella bavariensis).